The primary structure comprises 54 residues: UPF0391 membrane protein R00741 (54 aa).

2 helical membrane passes run 5-25 and 30-50; these read ALVF…GIAG and IAQV…VAGL.

Belongs to the UPF0391 family.

The protein resides in the cell membrane. This chain is UPF0391 membrane protein R00741, found in Rhizobium meliloti (strain 1021) (Ensifer meliloti).